Here is a 292-residue protein sequence, read N- to C-terminus: Protein rogdi homolog (292 aa).

Positions 1-12 (MEVQSLTITTNY) are enriched in polar residues. The segment at 1-25 (MEVQSLTITTNYPPKPASPNPQDIR) is disordered.

This sequence belongs to the rogdi family.

The protein resides in the nucleus envelope. The sequence is that of Protein rogdi homolog from Caenorhabditis elegans.